Here is a 276-residue protein sequence, read N- to C-terminus: Urease accessory protein UreD (276 aa).

This sequence belongs to the UreD family. As to quaternary structure, ureD, UreF and UreG form a complex that acts as a GTP-hydrolysis-dependent molecular chaperone, activating the urease apoprotein by helping to assemble the nickel containing metallocenter of UreC. The UreE protein probably delivers the nickel.

It localises to the cytoplasm. Its function is as follows. Required for maturation of urease via the functional incorporation of the urease nickel metallocenter. In Polaromonas sp. (strain JS666 / ATCC BAA-500), this protein is Urease accessory protein UreD.